Reading from the N-terminus, the 67-residue chain is Large ribosomal subunit protein uL29 (67 aa).

The protein belongs to the universal ribosomal protein uL29 family.

This is Large ribosomal subunit protein uL29 from Sphingopyxis alaskensis (strain DSM 13593 / LMG 18877 / RB2256) (Sphingomonas alaskensis).